Reading from the N-terminus, the 123-residue chain is Holo-[acyl-carrier-protein] synthase (123 aa).

Mg(2+) is bound by residues aspartate 8 and glutamate 56.

It belongs to the P-Pant transferase superfamily. AcpS family. It depends on Mg(2+) as a cofactor.

It localises to the cytoplasm. It catalyses the reaction apo-[ACP] + CoA = holo-[ACP] + adenosine 3',5'-bisphosphate + H(+). Transfers the 4'-phosphopantetheine moiety from coenzyme A to a Ser of acyl-carrier-protein. This Treponema denticola (strain ATCC 35405 / DSM 14222 / CIP 103919 / JCM 8153 / KCTC 15104) protein is Holo-[acyl-carrier-protein] synthase.